The primary structure comprises 342 residues: N-acetyl-gamma-glutamyl-phosphate reductase (342 aa).

Cys149 is an active-site residue.

It belongs to the NAGSA dehydrogenase family. Type 1 subfamily.

Its subcellular location is the cytoplasm. The catalysed reaction is N-acetyl-L-glutamate 5-semialdehyde + phosphate + NADP(+) = N-acetyl-L-glutamyl 5-phosphate + NADPH + H(+). It functions in the pathway amino-acid biosynthesis; L-arginine biosynthesis; N(2)-acetyl-L-ornithine from L-glutamate: step 3/4. Functionally, catalyzes the NADPH-dependent reduction of N-acetyl-5-glutamyl phosphate to yield N-acetyl-L-glutamate 5-semialdehyde. This is N-acetyl-gamma-glutamyl-phosphate reductase from Cereibacter sphaeroides (strain ATCC 17023 / DSM 158 / JCM 6121 / CCUG 31486 / LMG 2827 / NBRC 12203 / NCIMB 8253 / ATH 2.4.1.) (Rhodobacter sphaeroides).